Here is a 467-residue protein sequence, read N- to C-terminus: MSKGTLFDKVWDLHTVGTLPSGLTQLFIGLHLVHEVTSPQAFAMLRERGLKVLFPERTVATVDHIVPTENQARPFVDRLAEEMIQALEQNCQENNITFYNIGSGNQGIVHVIAPELGLTQPGMTIACGDSHTSSHGAFGAIAFGIGTSQVRDVLASQTLSLSKLKVRKIEVNGTLNPGVYAKDVILHIIRTLGVKGGVGYAYEYAGTTFEQMNMEERMTVCNMAIEGGARCGYVNPDQVTYDYLQGRDFAPQGADWEKAVAWWESIKSDADAEYDDVIVFNAADIPPTVTWGITPGQGIGVNQLIPQPEELLEEDRFVAEEAYRYMDLYPGQPIKGTKIDVCFIGSCTNGRLSDLQEAAKIAKGRHVAEGVKAFVVPGSERVKKAAEAEGLDKIFEAAGFEWREPGCSMCLAMNPDKLEGRQISASSSNRNFKGRQGSASGRTLLMSPAMVATAAIQGEVADVRELL.

[4Fe-4S] cluster-binding residues include C347, C407, and C410.

This sequence belongs to the aconitase/IPM isomerase family. LeuC type 1 subfamily. Heterodimer of LeuC and LeuD. It depends on [4Fe-4S] cluster as a cofactor.

The enzyme catalyses (2R,3S)-3-isopropylmalate = (2S)-2-isopropylmalate. It participates in amino-acid biosynthesis; L-leucine biosynthesis; L-leucine from 3-methyl-2-oxobutanoate: step 2/4. Its function is as follows. Catalyzes the isomerization between 2-isopropylmalate and 3-isopropylmalate, via the formation of 2-isopropylmaleate. The sequence is that of 3-isopropylmalate dehydratase large subunit from Trichormus variabilis (strain ATCC 29413 / PCC 7937) (Anabaena variabilis).